The chain runs to 625 residues: Beta-galactosidase large subunit (625 aa).

The active-site Proton donor is E465. The Nucleophile role is filled by E533.

This sequence belongs to the glycosyl hydrolase 2 family. Heterodimer of a large (LacL) and a small subunit (LacM).

The catalysed reaction is Hydrolysis of terminal non-reducing beta-D-galactose residues in beta-D-galactosides.. Functionally, component of a beta-galactosidase. The polypeptide is Beta-galactosidase large subunit (Latilactobacillus sakei (Lactobacillus sakei)).